Here is a 150-residue protein sequence, read N- to C-terminus: Kirola (150 aa).

Met-1 carries the N-acetylmethionine modification.

Belongs to the MLP family. Monomer. Post-translationally, the N-terminus is blocked.

This Actinidia deliciosa (Kiwi) protein is Kirola.